The sequence spans 317 residues: Protein IRX15-LIKE (317 aa).

The chain crosses the membrane as a helical span at residues leucine 27 to threonine 47.

Expressed in roots, rosette leaves, stems and siliques. Expressed in the xylem.

Its subcellular location is the golgi apparatus membrane. Its function is as follows. Required for xylan biosynthesis, but not directly involved in catalyzing the addition of sugars to the growing polymer. This is Protein IRX15-LIKE (IRX15-L) from Arabidopsis thaliana (Mouse-ear cress).